The following is a 441-amino-acid chain: Amino-acid acetyltransferase (441 aa).

The region spanning 295-434 is the N-acetyltransferase domain; that stretch reads EQVRRATIND…QALYNYQRRS (140 aa).

Belongs to the acetyltransferase family. ArgA subfamily. As to quaternary structure, homohexamer.

It is found in the cytoplasm. The enzyme catalyses L-glutamate + acetyl-CoA = N-acetyl-L-glutamate + CoA + H(+). Its pathway is amino-acid biosynthesis; L-arginine biosynthesis; N(2)-acetyl-L-ornithine from L-glutamate: step 1/4. The sequence is that of Amino-acid acetyltransferase from Pectobacterium atrosepticum (strain SCRI 1043 / ATCC BAA-672) (Erwinia carotovora subsp. atroseptica).